Consider the following 164-residue polypeptide: V-type proton ATPase subunit c' (164 aa).

At 1–16 the chain is on the lumenal side; the sequence is MDMVASDNVYAPLYAP. Residues 17 to 37 form a helical membrane-spanning segment; that stretch reads FFGFAGCALAMILSCLGAAIG. Topologically, residues 38 to 59 are cytoplasmic; it reads TAKSGIGIAGIGTFKPELIMKS. Residues 60 to 80 form a helical membrane-spanning segment; that stretch reads LIPVVMSGILAIYGLVVAVLI. Topologically, residues 81-98 are lumenal; sequence AGNLSPTEEYTLFNGFMH. Residues 99-119 form a helical membrane-spanning segment; that stretch reads LSCGLCVGFACLSSGYAIGIV. The Cytoplasmic portion of the chain corresponds to 120–136; that stretch reads GDVGVRKYMHQPRLFVG. The helical transmembrane segment at 137–157 threads the bilayer; sequence IVLILIFSEVLGLYGMIIALI. Residues 158–164 are Lumenal-facing; that stretch reads LNTKGSE.

The protein belongs to the V-ATPase proteolipid subunit family. As to quaternary structure, V-ATPase is a heteromultimeric enzyme composed of a peripheral catalytic V1 complex (components A to H) attached to an integral membrane V0 proton pore complex (components: a, c, c', c'', d, e, f and VOA1). The decameric c-ring forms the proton-conducting pore, and is composed of eight proteolipid subunits c, one subunit c' and one subunit c''.

The protein localises to the vacuole membrane. Proton-conducting pore forming subunit of the V0 complex of vacuolar(H+)-ATPase (V-ATPase), a multisubunit enzyme composed of a peripheral complex (V1) that hydrolyzes ATP and a membrane integral complex (V0) that translocates protons. V-ATPase is responsible for acidifying and maintaining the pH of intracellular compartments. This Candida glabrata (strain ATCC 2001 / BCRC 20586 / JCM 3761 / NBRC 0622 / NRRL Y-65 / CBS 138) (Yeast) protein is V-type proton ATPase subunit c' (VMA11).